A 274-amino-acid chain; its full sequence is Dermonecrotic toxin SdSicTox-betaIIB1bxii (274 aa).

Histidine 5 is an active-site residue. Glutamate 25 and aspartate 27 together coordinate Mg(2+). Histidine 41 functions as the Nucleophile in the catalytic mechanism. Intrachain disulfides connect cysteine 45–cysteine 51 and cysteine 47–cysteine 190. Aspartate 85 is a Mg(2+) binding site.

The protein belongs to the arthropod phospholipase D family. Class II subfamily. Mg(2+) serves as cofactor. In terms of tissue distribution, expressed by the venom gland.

It localises to the secreted. The enzyme catalyses an N-(acyl)-sphingosylphosphocholine = an N-(acyl)-sphingosyl-1,3-cyclic phosphate + choline. The catalysed reaction is an N-(acyl)-sphingosylphosphoethanolamine = an N-(acyl)-sphingosyl-1,3-cyclic phosphate + ethanolamine. It carries out the reaction a 1-acyl-sn-glycero-3-phosphocholine = a 1-acyl-sn-glycero-2,3-cyclic phosphate + choline. It catalyses the reaction a 1-acyl-sn-glycero-3-phosphoethanolamine = a 1-acyl-sn-glycero-2,3-cyclic phosphate + ethanolamine. Functionally, dermonecrotic toxins cleave the phosphodiester linkage between the phosphate and headgroup of certain phospholipids (sphingolipid and lysolipid substrates), forming an alcohol (often choline) and a cyclic phosphate. This toxin acts on sphingomyelin (SM). It may also act on ceramide phosphoethanolamine (CPE), lysophosphatidylcholine (LPC) and lysophosphatidylethanolamine (LPE), but not on lysophosphatidylserine (LPS), and lysophosphatidylglycerol (LPG). It acts by transphosphatidylation, releasing exclusively cyclic phosphate products as second products. Induces dermonecrosis, hemolysis, increased vascular permeability, edema, inflammatory response, and platelet aggregation. The sequence is that of Dermonecrotic toxin SdSicTox-betaIIB1bxii from Sicarius cf. damarensis (strain GJB-2008) (Six-eyed sand spider).